The sequence spans 164 residues: Protein SprT (164 aa).

The SprT-like domain maps to 14–156; sequence QQAETFFKRP…LCRRCREILV (143 aa). His69 serves as a coordination point for Zn(2+). Glu70 is an active-site residue. His73 is a binding site for Zn(2+).

It belongs to the SprT family. It depends on Zn(2+) as a cofactor.

It localises to the cytoplasm. This Pseudomonas entomophila (strain L48) protein is Protein SprT.